Reading from the N-terminus, the 100-residue chain is Protamine-2 (100 aa).

Residues 1–45 (MVRYHVRSPSERPHREYRQLVNGQEQGRHGQEEQGMSAEGVEGYG) are disordered. Phosphoserine is present on residues S8, S10, and S37. The segment covering 8-18 (SPSERPHREYR) has biased composition (basic and acidic residues).

The protein belongs to the protamine P2 family. As to quaternary structure, interacts with TDRP. In terms of processing, proteolytic processing into mature chains is required for histone eviction during spermatogenesis. Transition proteins (TNP1 and TNP2) are required for processing. In terms of tissue distribution, testis.

The protein resides in the nucleus. It localises to the chromosome. In terms of biological role, protamines substitute for histones in the chromatin of sperm during the haploid phase of spermatogenesis. They compact sperm DNA into a highly condensed, stable and inactive complex. This Alouatta seniculus (Red howler monkey) protein is Protamine-2 (PRM2).